Reading from the N-terminus, the 343-residue chain is Trans-enoyl reductase ACTTS2 (343 aa).

NADP(+) is bound at residue 42-45 (GDWK). 128 to 135 (VGITTVGQ) contributes to the substrate binding site. Residues 162–165 (STAT), 185–188 (SPHN), and Tyr203 each bind NADP(+). A substrate-binding site is contributed by 268 to 272 (GYTAL). 333-334 (VS) serves as a coordination point for NADP(+).

This sequence belongs to the zinc-containing alcohol dehydrogenase family. As to quaternary structure, monomer.

The protein operates within mycotoxin biosynthesis. Trans-enoyl reductase; part of the gene clusters that mediate the biosynthesis of the host-selective toxins (HSTs) ACT-toxins responsible for brown spot of tangerine disease by the tangerine pathotype which affects tangerines and mandarins. ACT-toxins consist of three moieties, 9,10-epoxy-8-hydroxy-9-methyl-decatrienoic acid (EDA), valine and a polyketide. ACT-toxin I is toxic to both citrus and pear; toxin II the 5''-deoxy derivative of ACT-toxin I, is highly toxic to pear and slightly toxic to citrus. On cellular level, ACT-toxins affect plasma membrane of susceptible cells and cause a sudden increase in loss of K(+) after a few minutes of toxin treatment. The acyl-CoA ligase ACTT1, the hydrolase ACTT2, the enoyl-CoA hydratases ACTT3 and ACTT6, and the acyl-CoA synthetase ACTT5 are all involved in the biosynthesis of the AK-, AF- and ACT-toxin common 9,10-epoxy-8-hydroxy-9-methyl-decatrienoic acid (EDA) structural moiety. The exact role of each enzyme, and of additional enzymes identified within the AF-toxin clusters have still to be determined. On the other hand, ACTTS1 to ACTTS4 are specific to the tangerine pathotype. The function of ACTTS3 is to elongate the polyketide chain portion of ACT-toxin that is unique to this toxin. The enoyl-reductase ACTTS2 might complement the missing enoyl-reductase (ER) domain in ACTTS3 in the synthesis of the polyketide portion of ACT-toxin. The roles of the nonribosomal peptide synthetases-related proteins ACTTS1 and ACTTS4 have also still not been elucidated. This is Trans-enoyl reductase ACTTS2 from Alternaria alternata (Alternaria rot fungus).